The sequence spans 202 residues: Flagellar transcriptional regulator FlhC (202 aa).

4 residues coordinate Zn(2+): cysteine 137, cysteine 140, cysteine 157, and cysteine 160.

This sequence belongs to the FlhC family. As to quaternary structure, heterohexamer composed of two FlhC and four FlhD subunits. Each FlhC binds a FlhD dimer, forming a heterotrimer, and a hexamer assembles by dimerization of two heterotrimers. Requires Zn(2+) as cofactor.

The protein resides in the cytoplasm. In terms of biological role, functions in complex with FlhD as a master transcriptional regulator that regulates transcription of several flagellar and non-flagellar operons by binding to their promoter region. Activates expression of class 2 flagellar genes, including fliA, which is a flagellum-specific sigma factor that turns on the class 3 genes. Also regulates genes whose products function in a variety of physiological pathways. The sequence is that of Flagellar transcriptional regulator FlhC from Variovorax paradoxus (strain S110).